The sequence spans 308 residues: Aspartate carbamoyltransferase catalytic subunit (308 aa).

Positions 57 and 58 each coordinate carbamoyl phosphate. Residue Lys-86 participates in L-aspartate binding. Carbamoyl phosphate-binding residues include Arg-107, His-135, and Gln-138. Positions 168 and 229 each coordinate L-aspartate. Carbamoyl phosphate contacts are provided by Leu-268 and Pro-269.

It belongs to the aspartate/ornithine carbamoyltransferase superfamily. ATCase family. As to quaternary structure, heterooligomer of catalytic and regulatory chains.

The enzyme catalyses carbamoyl phosphate + L-aspartate = N-carbamoyl-L-aspartate + phosphate + H(+). It participates in pyrimidine metabolism; UMP biosynthesis via de novo pathway; (S)-dihydroorotate from bicarbonate: step 2/3. In terms of biological role, catalyzes the condensation of carbamoyl phosphate and aspartate to form carbamoyl aspartate and inorganic phosphate, the committed step in the de novo pyrimidine nucleotide biosynthesis pathway. The sequence is that of Aspartate carbamoyltransferase catalytic subunit from Thermococcus gammatolerans (strain DSM 15229 / JCM 11827 / EJ3).